The primary structure comprises 379 residues: Origin of replication complex subunit 2 (379 aa).

The interval 1–25 is disordered; sequence MALRGGHAAAAAGVSSGSEDDDEEA. The span at 8 to 17 shows a compositional bias: low complexity; that stretch reads AAAAAGVSSG.

The protein belongs to the ORC2 family. In terms of assembly, component of the origin recognition complex (ORC) composed of at least ORC1, ORC2, ORC3, ORC4, ORC5 and ORC6. ORC is regulated in a cell-cycle and development dependent manner. It is sequentially assembled at the exit from anaphase of mitosis and disassembled as cells enter S phase.

It localises to the nucleus. Essential protein. Component of the origin recognition complex (ORC) that binds origins of replication. DNA-binding is ATP-dependent, however specific DNA sequences that define origins of replication have not been identified so far. ORC is required to assemble the pre-replication complex necessary to initiate DNA replication. The sequence is that of Origin of replication complex subunit 2 from Oryza sativa subsp. indica (Rice).